Consider the following 163-residue polypeptide: Large ribosomal subunit protein uL10 (163 aa).

Belongs to the universal ribosomal protein uL10 family. As to quaternary structure, part of the ribosomal stalk of the 50S ribosomal subunit. The N-terminus interacts with L11 and the large rRNA to form the base of the stalk. The C-terminus forms an elongated spine to which L12 dimers bind in a sequential fashion forming a multimeric L10(L12)X complex.

Forms part of the ribosomal stalk, playing a central role in the interaction of the ribosome with GTP-bound translation factors. In Pasteurella multocida (strain Pm70), this protein is Large ribosomal subunit protein uL10 (rplJ).